Here is a 625-residue protein sequence, read N- to C-terminus: DNA mismatch repair protein MutL (625 aa).

This sequence belongs to the DNA mismatch repair MutL/HexB family.

Functionally, this protein is involved in the repair of mismatches in DNA. It is required for dam-dependent methyl-directed DNA mismatch repair. May act as a 'molecular matchmaker', a protein that promotes the formation of a stable complex between two or more DNA-binding proteins in an ATP-dependent manner without itself being part of a final effector complex. This chain is DNA mismatch repair protein MutL, found in Bacteroides fragilis (strain YCH46).